A 332-amino-acid polypeptide reads, in one-letter code: Arabinogalactan endo-beta-1,4-galactanase (332 aa).

Asn111 carries an N-linked (GlcNAc...) asparagine glycan. Glu135 acts as the Proton donor in catalysis. Glu245 functions as the Nucleophile in the catalytic mechanism.

Belongs to the glycosyl hydrolase 53 family.

It carries out the reaction The enzyme specifically hydrolyzes (1-&gt;4)-beta-D-galactosidic linkages in type I arabinogalactans.. The chain is Arabinogalactan endo-beta-1,4-galactanase from Humicola insolens (Soft-rot fungus).